Reading from the N-terminus, the 422-residue chain is UDP-N-acetylglucosamine 1-carboxyvinyltransferase (422 aa).

23–24 (KN) is a phosphoenolpyruvate binding site. UDP-N-acetyl-alpha-D-glucosamine is bound at residue Arg-92. The active-site Proton donor is the Cys-116. Cys-116 carries the post-translational modification 2-(S-cysteinyl)pyruvic acid O-phosphothioketal. UDP-N-acetyl-alpha-D-glucosamine contacts are provided by residues 121–125 (RPVDL), 161–164 (KVSV), Asp-306, and Ile-328.

It belongs to the EPSP synthase family. MurA subfamily.

The protein resides in the cytoplasm. The catalysed reaction is phosphoenolpyruvate + UDP-N-acetyl-alpha-D-glucosamine = UDP-N-acetyl-3-O-(1-carboxyvinyl)-alpha-D-glucosamine + phosphate. The protein operates within cell wall biogenesis; peptidoglycan biosynthesis. In terms of biological role, cell wall formation. Adds enolpyruvyl to UDP-N-acetylglucosamine. The sequence is that of UDP-N-acetylglucosamine 1-carboxyvinyltransferase from Aliivibrio fischeri (strain ATCC 700601 / ES114) (Vibrio fischeri).